Here is a 49-residue protein sequence, read N- to C-terminus: Photosystem II reaction center protein K (49 aa).

A propeptide spanning residues 1–12 is cleaved from the precursor; that stretch reads MISSIHLRKLLG. Residues 24-44 traverse the membrane as a helical segment; it reads IIDVLPIIPVLFLLLAFVWQA.

This sequence belongs to the PsbK family. In terms of assembly, PSII is composed of 1 copy each of membrane proteins PsbA, PsbB, PsbC, PsbD, PsbE, PsbF, PsbH, PsbI, PsbJ, PsbK, PsbL, PsbM, PsbT, PsbX, PsbY, PsbZ, Psb30/Ycf12, at least 3 peripheral proteins of the oxygen-evolving complex and a large number of cofactors. It forms dimeric complexes.

The protein localises to the plastid. It localises to the chloroplast thylakoid membrane. Functionally, one of the components of the core complex of photosystem II (PSII). PSII is a light-driven water:plastoquinone oxidoreductase that uses light energy to abstract electrons from H(2)O, generating O(2) and a proton gradient subsequently used for ATP formation. It consists of a core antenna complex that captures photons, and an electron transfer chain that converts photonic excitation into a charge separation. The protein is Photosystem II reaction center protein K of Phacus acuminatus.